We begin with the raw amino-acid sequence, 318 residues long: tRNA U34 carboxymethyltransferase (318 aa).

Positions 88, 102, 107, 126, 192, 196, and 311 each coordinate carboxy-S-adenosyl-L-methionine.

This sequence belongs to the class I-like SAM-binding methyltransferase superfamily. CmoB family. Homotetramer.

The catalysed reaction is carboxy-S-adenosyl-L-methionine + 5-hydroxyuridine(34) in tRNA = 5-carboxymethoxyuridine(34) in tRNA + S-adenosyl-L-homocysteine + H(+). In terms of biological role, catalyzes carboxymethyl transfer from carboxy-S-adenosyl-L-methionine (Cx-SAM) to 5-hydroxyuridine (ho5U) to form 5-carboxymethoxyuridine (cmo5U) at position 34 in tRNAs. This chain is tRNA U34 carboxymethyltransferase, found in Pseudomonas fluorescens (strain ATCC BAA-477 / NRRL B-23932 / Pf-5).